Here is a 435-residue protein sequence, read N- to C-terminus: Histidine--tRNA ligase (435 aa).

Belongs to the class-II aminoacyl-tRNA synthetase family. As to quaternary structure, homodimer.

The protein resides in the cytoplasm. The catalysed reaction is tRNA(His) + L-histidine + ATP = L-histidyl-tRNA(His) + AMP + diphosphate + H(+). In Synechococcus sp. (strain ATCC 27144 / PCC 6301 / SAUG 1402/1) (Anacystis nidulans), this protein is Histidine--tRNA ligase.